Reading from the N-terminus, the 344-residue chain is Glyceraldehyde-3-phosphate dehydrogenase (344 aa).

Residues 11–12 and G110 contribute to the NAD(+) site; that span reads TI. 139 to 141 lines the D-glyceraldehyde 3-phosphate pocket; the sequence is SCN. The active-site Nucleophile is the C140. R169 contacts NAD(+). Residue 195–196 coordinates D-glyceraldehyde 3-phosphate; it reads HG. Q302 lines the NAD(+) pocket.

Belongs to the glyceraldehyde-3-phosphate dehydrogenase family. Homotetramer.

The protein resides in the cytoplasm. It carries out the reaction D-glyceraldehyde 3-phosphate + phosphate + NADP(+) = (2R)-3-phospho-glyceroyl phosphate + NADPH + H(+). It catalyses the reaction D-glyceraldehyde 3-phosphate + phosphate + NAD(+) = (2R)-3-phospho-glyceroyl phosphate + NADH + H(+). The protein operates within carbohydrate degradation; glycolysis; pyruvate from D-glyceraldehyde 3-phosphate: step 1/5. The protein is Glyceraldehyde-3-phosphate dehydrogenase of Pyrobaculum neutrophilum (strain DSM 2338 / JCM 9278 / NBRC 100436 / V24Sta) (Thermoproteus neutrophilus).